Consider the following 297-residue polypeptide: MEEVVGGGKERKRPRGALVGVGGGGESAATAAAWRTSRVARAAAGGKDRHSKVVTSRGLRDRRVRLSVPTAIAFYDIQDRLGVDQPSKAIEWLIRAAAAAIDALPSLDCSFALPAAASSPPPPAADDAEVSTSETSKSSVLSLANAPCDNGGGAFAELLHCSNTNGSKPLQQQQQATLAYYAAAQSAHMAAPMSFEVMAMPPHLAFSQEQQQHATVAAFDRGTLQSNASLWPPPPQPPPSQHPFLLQRFAAAPAEVAGLPFFLAGGVGGAAAAAPAATTNGGERRLQLWDFKEERKT.

Residues 1–22 are disordered; the sequence is MEEVVGGGKERKRPRGALVGVG. A TCP domain is found at 46–104; that stretch reads GKDRHSKVVTSRGLRDRRVRLSVPTAIAFYDIQDRLGVDQPSKAIEWLIRAAAAAIDAL. Disordered regions lie at residues 116-136 and 273-297; these read AASS…SETS and AAPA…ERKT. The segment covering 282-297 has biased composition (basic and acidic residues); sequence GERRLQLWDFKEERKT.

In terms of assembly, forms homodimers and heterodimers.

The protein resides in the nucleus. Functionally, transcription activator. Binds the promoter core sequence 5'-GGNCC-3'. The chain is Transcription factor PCF8 (PCF8) from Oryza sativa subsp. indica (Rice).